The following is a 58-amino-acid chain: Alpha-conotoxin-like Pu1.6 (58 aa).

Positions 1-17 (MFTVFLLVVLVTTVVFS) are cleaved as a signal peptide. Positions 18–35 (TSDHRPASNHENRRASKR) are excised as a propeptide. 2 disulfide bridges follow: Cys-44–Cys-50 and Cys-45–Cys-58. The tract at residues 46-48 (TNP) is lacks the Ser-Xaa-Pro motif that is crucial for potent interaction with nAChR.

Belongs to the conotoxin A superfamily. In terms of tissue distribution, expressed by the venom duct.

The protein resides in the secreted. Its function is as follows. Alpha-conotoxins act on postsynaptic membranes, they bind to the nicotinic acetylcholine receptors (nAChR) and thus inhibit them. Has possibly a distinct nAChR binding mode from other alpha-conotoxins, due to a different three residue motif (lacks the Ser-Xaa-Pro motif). This Conus pulicarius (Flea-bitten cone) protein is Alpha-conotoxin-like Pu1.6.